A 95-amino-acid polypeptide reads, in one-letter code: MSVTIDDVTYIAELARLRFSDDEALKMTDELNTILHYVDTLNEVDTEGVLPLSNIHDQKNVLRADEEHEPIANAAALSNAPDSQDRFFRVPKVLG.

The protein belongs to the GatC family. In terms of assembly, heterotrimer of A, B and C subunits.

The catalysed reaction is L-glutamyl-tRNA(Gln) + L-glutamine + ATP + H2O = L-glutaminyl-tRNA(Gln) + L-glutamate + ADP + phosphate + H(+). It catalyses the reaction L-aspartyl-tRNA(Asn) + L-glutamine + ATP + H2O = L-asparaginyl-tRNA(Asn) + L-glutamate + ADP + phosphate + 2 H(+). Its function is as follows. Allows the formation of correctly charged Asn-tRNA(Asn) or Gln-tRNA(Gln) through the transamidation of misacylated Asp-tRNA(Asn) or Glu-tRNA(Gln) in organisms which lack either or both of asparaginyl-tRNA or glutaminyl-tRNA synthetases. The reaction takes place in the presence of glutamine and ATP through an activated phospho-Asp-tRNA(Asn) or phospho-Glu-tRNA(Gln). The polypeptide is Aspartyl/glutamyl-tRNA(Asn/Gln) amidotransferase subunit C (Chlorobium phaeovibrioides (strain DSM 265 / 1930) (Prosthecochloris vibrioformis (strain DSM 265))).